The sequence spans 449 residues: MSHITFDYSKVLESFAGQHEIDFLQGQVTEADKLLREGTGPGSDFLGWLDLPENYDKEEFARILTAAEKIKSDSEVLVVIGIGGSYLGAKAAIDFLNHHFANLQTAKERKAPQILYAGNSISSTYLADLVEYVQDKEFSVNVISKSGTTTEPAIAFRVFKELLVKKYGQEEANKRIYATTDKVKGAVKVEADANNWETFVVPDNVGGRFSVLTAVGLLPIAASGADITALMEGANAARKDLSSDKISENIAYQYAAVRNLLYRKGYITEILANYEPSLQYFGEWWKQLAGESEGKDQKGIYPTSANFSTDLHSLGQFIQEGYRNLFETVIRVDNPRKNVIIPELAEDLDGLGYLQGKDVDFVNKKATDGVLLAHTDGGVPNMFVTLPAQDEFTLGYTIYFFELAIAVSGYMNAVNPFDQPGVEAYKRNMFALLGKPGFEALSAELNARL.

Glutamate 291 (proton donor) is an active-site residue. Active-site residues include histidine 312 and lysine 426.

The protein belongs to the GPI family.

It localises to the cytoplasm. The catalysed reaction is alpha-D-glucose 6-phosphate = beta-D-fructose 6-phosphate. It functions in the pathway carbohydrate biosynthesis; gluconeogenesis. It participates in carbohydrate degradation; glycolysis; D-glyceraldehyde 3-phosphate and glycerone phosphate from D-glucose: step 2/4. Functionally, catalyzes the reversible isomerization of glucose-6-phosphate to fructose-6-phosphate. The chain is Glucose-6-phosphate isomerase from Streptococcus pyogenes serotype M49 (strain NZ131).